The following is a 296-amino-acid chain: Acetylglutamate kinase (296 aa).

Substrate is bound by residues 69–70 (GG), Arg91, and Asn193.

The protein belongs to the acetylglutamate kinase family. ArgB subfamily.

It is found in the cytoplasm. The enzyme catalyses N-acetyl-L-glutamate + ATP = N-acetyl-L-glutamyl 5-phosphate + ADP. It functions in the pathway amino-acid biosynthesis; L-arginine biosynthesis; N(2)-acetyl-L-ornithine from L-glutamate: step 2/4. Its function is as follows. Catalyzes the ATP-dependent phosphorylation of N-acetyl-L-glutamate. The chain is Acetylglutamate kinase from Verminephrobacter eiseniae (strain EF01-2).